Consider the following 419-residue polypeptide: Tol-Pal system protein TolB (419 aa).

An N-terminal signal peptide occupies residues 1–19; the sequence is MCNRIISLFLLLFTGQVIA.

It belongs to the TolB family. In terms of assembly, the Tol-Pal system is composed of five core proteins: the inner membrane proteins TolA, TolQ and TolR, the periplasmic protein TolB and the outer membrane protein Pal. They form a network linking the inner and outer membranes and the peptidoglycan layer.

The protein localises to the periplasm. In terms of biological role, part of the Tol-Pal system, which plays a role in outer membrane invagination during cell division and is important for maintaining outer membrane integrity. This is Tol-Pal system protein TolB from Legionella pneumophila (strain Paris).